Reading from the N-terminus, the 186-residue chain is ATP synthase subunit b (186 aa).

The helical transmembrane segment at 28 to 48 (IVWSIIPFAVILFVFWKFVLP) threads the bilayer.

The protein belongs to the ATPase B chain family. As to quaternary structure, F-type ATPases have 2 components, F(1) - the catalytic core - and F(0) - the membrane proton channel. F(1) has five subunits: alpha(3), beta(3), gamma(1), delta(1), epsilon(1). F(0) has three main subunits: a(1), b(2) and c(10-14). The alpha and beta chains form an alternating ring which encloses part of the gamma chain. F(1) is attached to F(0) by a central stalk formed by the gamma and epsilon chains, while a peripheral stalk is formed by the delta and b chains.

The protein localises to the cell membrane. In terms of biological role, f(1)F(0) ATP synthase produces ATP from ADP in the presence of a proton or sodium gradient. F-type ATPases consist of two structural domains, F(1) containing the extramembraneous catalytic core and F(0) containing the membrane proton channel, linked together by a central stalk and a peripheral stalk. During catalysis, ATP synthesis in the catalytic domain of F(1) is coupled via a rotary mechanism of the central stalk subunits to proton translocation. Its function is as follows. Component of the F(0) channel, it forms part of the peripheral stalk, linking F(1) to F(0). In Corynebacterium jeikeium (strain K411), this protein is ATP synthase subunit b.